The chain runs to 247 residues: Ribonuclease PH (247 aa).

Phosphate is bound by residues Arg87 and 125–127 (GTR).

It belongs to the RNase PH family. As to quaternary structure, homohexameric ring arranged as a trimer of dimers.

It carries out the reaction tRNA(n+1) + phosphate = tRNA(n) + a ribonucleoside 5'-diphosphate. Phosphorolytic 3'-5' exoribonuclease that plays an important role in tRNA 3'-end maturation. Removes nucleotide residues following the 3'-CCA terminus of tRNAs; can also add nucleotides to the ends of RNA molecules by using nucleoside diphosphates as substrates, but this may not be physiologically important. Probably plays a role in initiation of 16S rRNA degradation (leading to ribosome degradation) during starvation. This chain is Ribonuclease PH, found in Frankia casuarinae (strain DSM 45818 / CECT 9043 / HFP020203 / CcI3).